Consider the following 268-residue polypeptide: Shikimate dehydrogenase (NADP(+)) (268 aa).

Thr-62 contributes to the shikimate binding site. Lys-66 (proton acceptor) is an active-site residue. NADP(+) is bound at residue Glu-78. Shikimate-binding residues include Asn-87 and Asp-102. Residues 126–130 and Leu-207 each bind NADP(+); that span reads GSGGI. Residue Tyr-209 coordinates shikimate. Gly-230 is a binding site for NADP(+).

This sequence belongs to the shikimate dehydrogenase family. As to quaternary structure, homodimer.

The enzyme catalyses shikimate + NADP(+) = 3-dehydroshikimate + NADPH + H(+). Its pathway is metabolic intermediate biosynthesis; chorismate biosynthesis; chorismate from D-erythrose 4-phosphate and phosphoenolpyruvate: step 4/7. In terms of biological role, involved in the biosynthesis of the chorismate, which leads to the biosynthesis of aromatic amino acids. Catalyzes the reversible NADPH linked reduction of 3-dehydroshikimate (DHSA) to yield shikimate (SA). The sequence is that of Shikimate dehydrogenase (NADP(+)) from Thermoplasma acidophilum (strain ATCC 25905 / DSM 1728 / JCM 9062 / NBRC 15155 / AMRC-C165).